A 654-amino-acid polypeptide reads, in one-letter code: Fructose-1,6-bisphosphatase class 3 (654 aa).

Residues 288 to 307 form a disordered region; it reads NPAFKPKKRPDKHERLTQRE. Basic and acidic residues predominate over residues 298-307; it reads DKHERLTQRE.

It belongs to the FBPase class 3 family. It depends on Mn(2+) as a cofactor.

It carries out the reaction beta-D-fructose 1,6-bisphosphate + H2O = beta-D-fructose 6-phosphate + phosphate. It participates in carbohydrate biosynthesis; gluconeogenesis. The chain is Fructose-1,6-bisphosphatase class 3 from Staphylococcus aureus (strain bovine RF122 / ET3-1).